The primary structure comprises 92 residues: Small ribosomal subunit protein bS20 (92 aa).

The protein belongs to the bacterial ribosomal protein bS20 family.

Functionally, binds directly to 16S ribosomal RNA. This Persephonella marina (strain DSM 14350 / EX-H1) protein is Small ribosomal subunit protein bS20.